A 467-amino-acid chain; its full sequence is Glutamate--tRNA ligase (467 aa).

The short motif at 10-20 (PSPTGYLHVGG) is the 'HIGH' region element. C99, C101, C126, and E128 together coordinate Zn(2+). The short motif at 237 to 241 (RLSKR) is the 'KMSKS' region element. K240 contributes to the ATP binding site.

This sequence belongs to the class-I aminoacyl-tRNA synthetase family. Glutamate--tRNA ligase type 1 subfamily. Monomer. Requires Zn(2+) as cofactor.

It localises to the cytoplasm. The enzyme catalyses tRNA(Glu) + L-glutamate + ATP = L-glutamyl-tRNA(Glu) + AMP + diphosphate. In terms of biological role, catalyzes the attachment of glutamate to tRNA(Glu) in a two-step reaction: glutamate is first activated by ATP to form Glu-AMP and then transferred to the acceptor end of tRNA(Glu). This Geotalea uraniireducens (strain Rf4) (Geobacter uraniireducens) protein is Glutamate--tRNA ligase.